Reading from the N-terminus, the 207-residue chain is Outer-membrane lipoprotein LolB (207 aa).

Residues 1–21 (MPMRKRHFYRLLPLASLLLAA) form the signal peptide. Cysteine 22 carries N-palmitoyl cysteine lipidation. The S-diacylglycerol cysteine moiety is linked to residue cysteine 22.

It belongs to the LolB family. In terms of assembly, monomer.

It localises to the cell outer membrane. Functionally, plays a critical role in the incorporation of lipoproteins in the outer membrane after they are released by the LolA protein. The protein is Outer-membrane lipoprotein LolB of Yersinia pestis bv. Antiqua (strain Antiqua).